We begin with the raw amino-acid sequence, 89 residues long: Translation initiation factor IF-1 1 (89 aa).

The 73-residue stretch at Met1–Leu73 folds into the S1-like domain.

This sequence belongs to the IF-1 family. In terms of assembly, component of the 30S ribosomal translation pre-initiation complex which assembles on the 30S ribosome in the order IF-2 and IF-3, IF-1 and N-formylmethionyl-tRNA(fMet); mRNA recruitment can occur at any time during PIC assembly.

It is found in the cytoplasm. One of the essential components for the initiation of protein synthesis. Stabilizes the binding of IF-2 and IF-3 on the 30S subunit to which N-formylmethionyl-tRNA(fMet) subsequently binds. Helps modulate mRNA selection, yielding the 30S pre-initiation complex (PIC). Upon addition of the 50S ribosomal subunit IF-1, IF-2 and IF-3 are released leaving the mature 70S translation initiation complex. The chain is Translation initiation factor IF-1 1 from Acidovorax sp. (strain JS42).